The chain runs to 538 residues: ATP-dependent rRNA helicase RRP3 (538 aa).

The segment covering 1–11 has biased composition (basic residues); that stretch reads MSSAKRVKLSH. Residues 1-112 form a disordered region; it reads MSSAKRVKLS…SKEETPTKSF (112 aa). Positions 34-47 are enriched in low complexity; sequence KKITQAPKAAAPIK. Residues 53 to 85 show a composition bias toward acidic residues; that stretch reads AEEDDDDDDKDDKDEEDEEQNDDSSDEASENDD. Positions 92-112 are enriched in basic and acidic residues; that stretch reads EATKEGQTELPSKEETPTKSF. The short motif at 110-138 is the Q motif element; sequence KSFRDLGIVEPLCEACEALKFKKPTPIQE. Residues 141–312 enclose the Helicase ATP-binding domain; that stretch reads IPLALQGRDV…RASLRDPLKV (172 aa). Position 154-161 (154-161) interacts with ATP; that stretch reads AETGSGKT. Residues 260-263 carry the DEAD box motif; sequence DEAD. Residues 336 to 486 form the Helicase C-terminal domain; the sequence is HKDVYLIYLA…LFQPDKEEVM (151 aa). The span at 498–512 shows a compositional bias: basic and acidic residues; that stretch reads HAREEMKALHEDRGK. The segment at 498-538 is disordered; it reads HAREEMKALHEDRGKKGAVLKGRKRGSATKRRHDDMDAEEG. A compositionally biased stretch (basic residues) spans 513–528; it reads KGAVLKGRKRGSATKR.

Belongs to the DEAD box helicase family. DDX47/RRP3 subfamily. Interacts with the SSU processome.

Its subcellular location is the nucleus. The enzyme catalyses ATP + H2O = ADP + phosphate + H(+). In terms of biological role, ATP-dependent rRNA helicase required for pre-ribosomal RNA processing. Involved in the maturation of the 35S-pre-rRNA and to its cleavage to mature 18S rRNA. The protein is ATP-dependent rRNA helicase RRP3 of Pyricularia oryzae (strain 70-15 / ATCC MYA-4617 / FGSC 8958) (Rice blast fungus).